The primary structure comprises 79 residues: ATP synthase subunit c (79 aa).

2 helical membrane passes run 11–31 and 55–75; these read ISAA…IGIL and IVMG…LYLI.

It belongs to the ATPase C chain family. As to quaternary structure, F-type ATPases have 2 components, F(1) - the catalytic core - and F(0) - the membrane proton channel. F(1) has five subunits: alpha(3), beta(3), gamma(1), delta(1), epsilon(1). F(0) has three main subunits: a(1), b(2) and c(10-14). The alpha and beta chains form an alternating ring which encloses part of the gamma chain. F(1) is attached to F(0) by a central stalk formed by the gamma and epsilon chains, while a peripheral stalk is formed by the delta and b chains.

The protein resides in the cell membrane. Its function is as follows. F(1)F(0) ATP synthase produces ATP from ADP in the presence of a proton or sodium gradient. F-type ATPases consist of two structural domains, F(1) containing the extramembraneous catalytic core and F(0) containing the membrane proton channel, linked together by a central stalk and a peripheral stalk. During catalysis, ATP synthesis in the catalytic domain of F(1) is coupled via a rotary mechanism of the central stalk subunits to proton translocation. Key component of the F(0) channel; it plays a direct role in translocation across the membrane. A homomeric c-ring of between 10-14 subunits forms the central stalk rotor element with the F(1) delta and epsilon subunits. This Wigglesworthia glossinidia brevipalpis protein is ATP synthase subunit c.